The sequence spans 375 residues: Metal tolerance protein B (375 aa).

Topologically, residues 1–57 are cytoplasmic; sequence MELEQICILKPDDEEEMESPSPSKTEENLGVVPLSCAFTRQEHCVSETKEREESTRR. Residues 58–78 traverse the membrane as a helical segment; the sequence is LSSLIFLYLIVMSVQIVGGFK. At 79 to 84 the chain is on the vacuolar side; sequence ANSLAV. The chain crosses the membrane as a helical span at residues 85 to 105; that stretch reads MTDAAHLLSDVAGLCVSLLAI. At 106–122 the chain is on the cytoplasmic side; sequence KVSSWEANPRNSFGFKR. Residues 123–143 form a helical membrane-spanning segment; sequence LEVLAAFLSVQLIWLVSGVII. At 144 to 160 the chain is on the vacuolar side; sequence HEAIQRLLSRSREVNGE. Residues 161-181 form a helical membrane-spanning segment; that stretch reads IMFGISAFGFFMNLVMVLWLG. Positions 182-206 are required for zinc-binding; the sequence is HNHSHHHHDHHHHHHNHKHQHQHHH. Topologically, residues 182-240 are cytoplasmic; the sequence is HNHSHHHHDHHHHHHNHKHQHQHHHKEVVAEEEEEEMNPLKGEKSSSKEMNINIQGAYL. A helical membrane pass occupies residues 241–261; sequence HAMADMIQSLGVMIGGGIIWV. Topologically, residues 262–264 are vacuolar; that stretch reads KPK. The helical transmembrane segment at 265 to 285 threads the bilayer; sequence WVLVDLICTLVFSAFALAATL. The Cytoplasmic segment spans residues 286–375; the sequence is PILKNIFGIL…YHATVQVESE (90 aa).

It belongs to the cation diffusion facilitator (CDF) transporter (TC 2.A.4) family. SLC30A subfamily.

It localises to the vacuole membrane. In terms of biological role, involved in sequestration of excess zinc in the cytoplasm into vacuoles to maintain zinc homeostasis. This chain is Metal tolerance protein B (MTPB), found in Arabidopsis thaliana (Mouse-ear cress).